The sequence spans 95 residues: Aspartyl/glutamyl-tRNA(Asn/Gln) amidotransferase subunit C (95 aa).

Belongs to the GatC family. As to quaternary structure, heterotrimer of A, B and C subunits.

It carries out the reaction L-glutamyl-tRNA(Gln) + L-glutamine + ATP + H2O = L-glutaminyl-tRNA(Gln) + L-glutamate + ADP + phosphate + H(+). The catalysed reaction is L-aspartyl-tRNA(Asn) + L-glutamine + ATP + H2O = L-asparaginyl-tRNA(Asn) + L-glutamate + ADP + phosphate + 2 H(+). Allows the formation of correctly charged Asn-tRNA(Asn) or Gln-tRNA(Gln) through the transamidation of misacylated Asp-tRNA(Asn) or Glu-tRNA(Gln) in organisms which lack either or both of asparaginyl-tRNA or glutaminyl-tRNA synthetases. The reaction takes place in the presence of glutamine and ATP through an activated phospho-Asp-tRNA(Asn) or phospho-Glu-tRNA(Gln). The polypeptide is Aspartyl/glutamyl-tRNA(Asn/Gln) amidotransferase subunit C (Chlorobium limicola (strain DSM 245 / NBRC 103803 / 6330)).